Reading from the N-terminus, the 382-residue chain is Chaperone protein DnaJ 1 (382 aa).

One can recognise a J domain in the interval 4–68 (DYYGILGVDR…DKRRIVDMGG (65 aa)). The CR-type zinc finger occupies 134–216 (GAKKDLTLDT…CAGDGRVRAR (83 aa)). C147, C150, C164, C167, C190, C193, C204, and C207 together coordinate Zn(2+). 4 CXXCXGXG motif repeats span residues 147–154 (CTKCHGSG), 164–171 (CGTCNGAG), 190–197 (CHTCDGTG), and 204–211 (CTECAGDG).

Belongs to the DnaJ family. Homodimer. Zn(2+) serves as cofactor.

The protein resides in the cytoplasm. Functionally, participates actively in the response to hyperosmotic and heat shock by preventing the aggregation of stress-denatured proteins and by disaggregating proteins, also in an autonomous, DnaK-independent fashion. Unfolded proteins bind initially to DnaJ; upon interaction with the DnaJ-bound protein, DnaK hydrolyzes its bound ATP, resulting in the formation of a stable complex. GrpE releases ADP from DnaK; ATP binding to DnaK triggers the release of the substrate protein, thus completing the reaction cycle. Several rounds of ATP-dependent interactions between DnaJ, DnaK and GrpE are required for fully efficient folding. Also involved, together with DnaK and GrpE, in the DNA replication of plasmids through activation of initiation proteins. This is Chaperone protein DnaJ 1 from Corynebacterium glutamicum (strain ATCC 13032 / DSM 20300 / JCM 1318 / BCRC 11384 / CCUG 27702 / LMG 3730 / NBRC 12168 / NCIMB 10025 / NRRL B-2784 / 534).